The chain runs to 351 residues: Nicotinate-nucleotide--dimethylbenzimidazole phosphoribosyltransferase (351 aa).

Residue Glu317 is the Proton acceptor of the active site.

It belongs to the CobT family.

The enzyme catalyses 5,6-dimethylbenzimidazole + nicotinate beta-D-ribonucleotide = alpha-ribazole 5'-phosphate + nicotinate + H(+). Its pathway is nucleoside biosynthesis; alpha-ribazole biosynthesis; alpha-ribazole from 5,6-dimethylbenzimidazole: step 1/2. Functionally, catalyzes the synthesis of alpha-ribazole-5'-phosphate from nicotinate mononucleotide (NAMN) and 5,6-dimethylbenzimidazole (DMB). This chain is Nicotinate-nucleotide--dimethylbenzimidazole phosphoribosyltransferase, found in Bradyrhizobium sp. (strain BTAi1 / ATCC BAA-1182).